The chain runs to 368 residues: Glutamine synthetase root isozyme 2 (368 aa).

Positions 19-99 (IIAEYIWVGG…VMCDCYEPNG (81 aa)) constitute a GS beta-grasp domain. A disordered region spans residues 38-66 (RTLSGPVDDPSKLPKWNFDGSSTGQAPGD). The GS catalytic domain occupies 106 to 368 (KRHGAAKIFS…NGDGKGAAAP (263 aa)).

This sequence belongs to the glutamine synthetase family. As to quaternary structure, homooctamer. As to expression, found mainly in the vascular tissues of seedling roots.

Its subcellular location is the cytoplasm. It carries out the reaction L-glutamate + NH4(+) + ATP = L-glutamine + ADP + phosphate + H(+). Its function is as follows. Plays a role in the flow of nitrogen into nitrogenous organic compounds. The chain is Glutamine synthetase root isozyme 2 (GLN2) from Zea mays (Maize).